Here is a 233-residue protein sequence, read N- to C-terminus: Sugar fermentation stimulation protein homolog (233 aa).

It belongs to the SfsA family.

This Teredinibacter turnerae (strain ATCC 39867 / T7901) protein is Sugar fermentation stimulation protein homolog.